The following is a 1104-amino-acid chain: Reverse gyrase (1104 aa).

The RG N-terminal-type zinc finger occupies 1–39; the sequence is MAVNSKYHHSCINCGGLNTDERNERGLPCEVCLPEDSPS. Residues cysteine 11, cysteine 14, cysteine 29, and cysteine 32 each contribute to the Zn(2+) site. Phenylalanine 75, aspartate 78, glutamine 83, glycine 103, glycine 105, lysine 106, threonine 107, and threonine 108 together coordinate ADP. ATP-binding positions include glutamine 83 and 100–107; that span reads APTGVGKT. A Helicase ATP-binding domain is found at 87–242; the sequence is AKRIVQGKSF…FSTIKQGKIY (156 aa). The short motif at 203–206 is the DEAD box element; the sequence is DDVD. Residues 223–250 form an insert region region; sequence GIPEEIIRKAFSTIKQGKIYERPKNLKP. One can recognise a Helicase C-terminal domain in the interval 300–522; it reads KLVELLEIFR…EAEANWKELV (223 aa). A latch region region spans residues 390 to 460; sequence RFSLELDKAP…KDEDLELIIP (71 aa). The tract at residues 538-1104 is topoisomerase I; sequence DTSRSLLIIV…EEIKSLMEEG (567 aa). Residues 542 to 699 enclose the Toprim domain; sequence SLLIIVESPT…SLRRIEMHEI (158 aa). A Mg(2+)-binding site is contributed by glutamate 548. The segment at 618–645 adopts an RG C-terminal-type zinc-finger fold; the sequence is LKRCRDCGYQFTEDRDECPVCSSKNIDD. Positions 621, 624, 635, and 638 each coordinate Zn(2+). Aspartate 668 serves as a coordination point for Mg(2+). The region spanning 715-1101 is the Topo IA-type catalytic domain; sequence DFNLVKAQIV…LLYEEIKSLM (387 aa). Tyrosine 851 (O-(5'-phospho-DNA)-tyrosine intermediate) is an active-site residue.

This sequence in the N-terminal section; belongs to the DEAD box helicase family. DDVD subfamily. The protein in the C-terminal section; belongs to the type IA topoisomerase family. In terms of assembly, monomer. Zn(2+) is required as a cofactor. The cofactor is Mg(2+).

The protein resides in the cytoplasm. It carries out the reaction ATP + H2O = ADP + phosphate + H(+). Its function is as follows. Modifies the topological state of DNA by introducing positive supercoils in an ATP-dependent process. Increases the linking number in steps of +1. Probably recognizes regions with a low GC content which melt and form a ssDNA bubble, allowing the enzyme to bind and cleave the DNA prior to strand passage; the bubble is probably cleaved by 2 reverse gyrase molecules, one on each strand. Positively supercoils DNA with all NTPS, although it strongly prefers ATP. In the presence of non-hydrolyzable ATP analogs it partially relaxes negative supercoils. Has an intrinsic ATPase activity that is stimulated by DNA; ssDNA is most effective. Binds to single-stranded DNA, transiently cleaves and then rejoins the ends, introducing a positive supercoil in the process. The scissile phosphodiester is attacked by the catalytic tyrosine of the enzyme, resulting in the formation of a DNA-(5'-phosphotyrosyl)-enzyme intermediate. The helicase-like domain is a nucleotide-dependent switch that alternates between a physically closed ATP-bound state with a slight preference for dsDNA, and an open ADP-bound state with a high preference for ssDNA. Whole enzyme has a very poor (k-unwind=0.001 sec(-1)) non-processive helicase activity in the 3'-5' direction that works on short substrates, while the isolated helicase domain has a slightly better helicase activity that works in both directions. Probably involved in rewinding DNA strands in regions of the chromosome that have opened up to allow replication, transcription, DNA repair and/or for DNA protection. The sequence is that of Reverse gyrase from Thermotoga maritima (strain ATCC 43589 / DSM 3109 / JCM 10099 / NBRC 100826 / MSB8).